A 217-amino-acid chain; its full sequence is Monomethylamine corrinoid protein 2 (217 aa).

One can recognise a B12-binding N-terminal domain in the interval 1–91 (MTNTEIFEKL…ELEKSKVEGE (91 aa)). The B12-binding domain occupies 93–217 (TGLAITFVAE…AAKVALNIMK (125 aa)). Position 106 (His-106) interacts with methylcob(III)alamin.

The protein belongs to the methylamine corrinoid protein family. Can form a complex with MtmB.

It functions in the pathway one-carbon metabolism; methanogenesis from methylamine. Acts as a methyl group carrier between MtmB and MtbA. In Methanosarcina acetivorans (strain ATCC 35395 / DSM 2834 / JCM 12185 / C2A), this protein is Monomethylamine corrinoid protein 2 (mtmC2).